A 92-amino-acid polypeptide reads, in one-letter code: C-C motif chemokine 3 (92 aa).

The signal sequence occupies residues 1–23 (MKVSTTALAVLLCTMTLCNQVFS). 2 disulfides stabilise this stretch: Cys34-Cys57 and Cys35-Cys73.

It belongs to the intercrine beta (chemokine CC) family. In terms of assembly, self-associates. Also heterodimer of MIP-1-alpha(4-69) and MIP-1-beta(3-69). Interacts with CCR1. In terms of tissue distribution, expressed in lung, spleen, and pancreas.

It is found in the secreted. Functionally, monokine with inflammatory and chemokinetic properties. Binds to CCR1, CCR4 and CCR5. One of the major HIV-suppressive factors produced by CD8+ T-cells. Recombinant MIP-1-alpha induces a dose-dependent inhibition of different strains of HIV-1, HIV-2, and simian immunodeficiency virus (SIV). In Mus musculus (Mouse), this protein is C-C motif chemokine 3 (Ccl3).